We begin with the raw amino-acid sequence, 1176 residues long: Histidine kinase 2 (1176 aa).

At 1 to 29 (MSITCELLNLTSKKAKKSSSSDKKWLKKP) the chain is on the cytoplasmic side. The chain crosses the membrane as a helical span at residues 30-50 (LFFLILCGSLVIVLVMFLRLG). Residues 51-174 (RSQKEETDSC…LEQGLSSYLR (124 aa)) are Extracellular-facing. The helical transmembrane segment at 175–195 (NAWWCLILGVLVCHKIYVSHS) threads the bilayer. The Cytoplasmic segment spans residues 196 to 232 (KARGERKEKVHLQEALAPKKQQQRAQTSSRGAGRWRK). The chain crosses the membrane as a helical span at residues 233–253 (NILLLGILGGVSFSVWWFWDT). Topologically, residues 254-536 (NEEIIMKRRE…CRFKHKLPIP (283 aa)) are extracellular. The CHASE domain occupies 302–526 (IPSAIDQRTF…GDPSRNHEMH (225 aa)). A helical membrane pass occupies residues 537-557 (WTAITPSILVLVITFLVGYIL). The Cytoplasmic portion of the chain corresponds to 558-1176 (YEAINRIATV…TAVARFFEPC (619 aa)). The Histidine kinase domain occupies 594–867 (TVSHEIRTPM…TFSFTGVFGK (274 aa)). Position 597 is a phosphohistidine; by autocatalysis (His-597). Response regulatory domains lie at 891-1013 (RALV…QETL) and 1036-1173 (QILV…ARFF). 2 positions are modified to 4-aspartylphosphate: Asp-942 and Asp-1086.

In terms of assembly, self-interacts. Interacts with AHK3, AHP1, AHP2, AHP3, AHP5, ATAF2, AT2S3, BETAA-AD, CYP20-2, DRP1A, HIR1, HIR2, PI4KB1, PI4KG5 and At4g12060. In terms of processing, autophosphorylated predominantly on His residues. Activation probably requires a transfer of a phosphate group between a His in the transmitter domain and an Asp of the receiver domain. As to expression, expressed in roots, leaves and flowers, mostly in the vascular tissues. Present in seedlings.

The protein localises to the endoplasmic reticulum membrane. It catalyses the reaction ATP + protein L-histidine = ADP + protein N-phospho-L-histidine.. With respect to regulation, activated by cytokinins to initiate phosphorelay signaling. Functionally, cytokinins (CK) receptor related to bacterial two-component regulators. Functions as a histidine kinase and transmits the stress signal to a downstream MAPK cascade. This protein undergoes an ATP-dependent autophosphorylation at a conserved histidine residue in the kinase core, and a phosphoryl group is then transferred to a conserved aspartate residue in the receiver domain. In the presence of cytokinin, feeds phosphate to phosphorelay-integrating histidine phosphotransfer protein (HPt) and activates subsequent cascade. Involved in meristems establishment in seedlings. Redundant negative regulator of drought and salt stress responses and abscisic acid (ABA) signaling. Together with AHK3, plays a negative regulatory role in cold stress signaling via inhibition of ABA response, occurring independently of the cold acclimation pathway. Redundant positive regulator of cytokinin signaling that regulates many developmental processes including seed germination, cell division, seed size, chlorophyll retention during leaf senescence, root repression and shoot promotion. Involved in alkamides (e.g. N-isobutyl decanamide) and N-acylethanolamides (NAE) signaling that control meristematic activity and differentiation processes during plant development. Contributes to vascular bundle formation and secondary growth in a cytokinin-dependent manner, probably by promoting the maintenance of mitotic activity and/or identity of procambial cells. Together with AHK4, required for growth and reproduction promotion stimulated by the endophytic fungus Piriformospora indica in a trans-zeatin-dependent manner. Required by the cytokinin-dependent flower development regulation pathway. The chain is Histidine kinase 2 (AHK2) from Arabidopsis thaliana (Mouse-ear cress).